A 447-amino-acid chain; its full sequence is Alpha-1,3-mannosyl-glycoprotein 2-beta-N-acetylglucosaminyltransferase (447 aa).

At 1–6 (MLKKQS) the chain is on the cytoplasmic side. Residues 7–29 (AGLVLWGAIIFVGWNALLLLFFW) form a helical; Signal-anchor for type II membrane protein membrane-spanning segment. Topologically, residues 30 to 447 (TRPAPGRLPS…TWNGYDPSWN (418 aa)) are lumenal. The cysteines at positions 115 and 145 are disulfide-linked. Substrate is bound by residues Arg-117, Asp-144, His-190, and Asp-212. Residue Asp-213 coordinates Mn(2+). Cysteines 239 and 305 form a disulfide. The active-site Proton acceptor is Asp-291. Ser-322 provides a ligand contact to substrate.

It belongs to the glycosyltransferase 13 family. As to quaternary structure, interacts with MGAT4D. Interacts with BRI3. It depends on Mn(2+) as a cofactor. Appears to be present in all tissues.

The protein resides in the golgi apparatus membrane. It localises to the cytoplasm. Its subcellular location is the perinuclear region. The catalysed reaction is N(4)-(alpha-D-Man-(1-&gt;3)-[alpha-D-Man-(1-&gt;3)-[alpha-D-Man-(1-&gt;6)]-alpha-D-Man-(1-&gt;6)]-beta-D-Man-(1-&gt;4)-beta-D-GlcNAc-(1-&gt;4)-beta-D-GlcNAc)-L-asparaginyl-[protein] (N-glucan mannose isomer 5A1,2) + UDP-N-acetyl-alpha-D-glucosamine = N(4)-{beta-D-GlcNAc-(1-&gt;2)-alpha-D-Man-(1-&gt;3)-[alpha-D-Man-(1-&gt;3)-[alpha-D-Man-(1-&gt;6)]-alpha-D-Man-(1-&gt;6)]-beta-D-Man-(1-&gt;4)-beta-D-GlcNAc-(1-&gt;4)-beta-D-GlcNAc}-L-asparaginyl-[protein] + UDP + H(+). Its pathway is protein modification; protein glycosylation. In terms of biological role, initiates complex N-linked carbohydrate formation. Essential for the conversion of high-mannose to hybrid and complex N-glycans. In Rattus norvegicus (Rat), this protein is Alpha-1,3-mannosyl-glycoprotein 2-beta-N-acetylglucosaminyltransferase (Mgat1).